A 173-amino-acid chain; its full sequence is T-cell surface glycoprotein CD3 gamma chain (173 aa).

The first 22 residues, 1-22 (MEQGKHLAGLILAVFLLQGTMA), serve as a signal peptide directing secretion. Residues 23–111 (HVKEVKVDDN…NCIELNPSTV (89 aa)) are Extracellular-facing. Positions 24–94 (VKEVKVDDNR…GSNNQSKSLQ (71 aa)) constitute an Ig-like domain. Cysteine 42 and cysteine 83 are disulfide-bonded. 2 N-linked (GlcNAc...) asparagine glycosylation sites follow: asparagine 45 and asparagine 88. A helical transmembrane segment spans residues 112-132 (AGFIFTEIVSIFLLAVGVYFI). Topologically, residues 133 to 173 (AGQEGVRQSRASDKQTLLNNDQLYQPLKEREDDQYSHLRKN) are cytoplasmic. The residue at position 141 (serine 141) is a Phosphoserine. Serine 144 bears the Phosphoserine; by PKC mark. The ITAM domain maps to 145–173 (DKQTLLNNDQLYQPLKEREDDQYSHLRKN). The Di-leucine motif signature appears at 149 to 150 (LL).

As to quaternary structure, the TCR-CD3 complex is composed of a CD3D/CD3E and a CD3G/CD3E heterodimers that preferentially associate with TCRalpha and TCRbeta, respectively, to form TCRalpha/CD3E/CD3G and TCRbeta/CD3G/CD3E trimers. In turn, the hexamer interacts with CD3Z homodimer to form the TCR-CD3 complex. Alternatively, TCRalpha and TCRbeta can be replaced by TCRgamma and TCRdelta. Post-translationally, phosphorylated on Tyr residues after T-cell receptor triggering by LCK in association with CD4/CD8. Phosphorylated also by PKC; leading to the TCR complex down-regulation. In terms of processing, phosphorylated on Tyr residues after T-cell receptor triggering by LCK in association with CD4/CD8.

It is found in the cell membrane. Its function is as follows. Part of the TCR-CD3 complex present on T-lymphocyte cell surface that plays an essential role in adaptive immune response. When antigen presenting cells (APCs) activate T-cell receptor (TCR), TCR-mediated signals are transmitted across the cell membrane by the CD3 chains CD3D, CD3E, CD3G and CD3Z. All CD3 chains contain immunoreceptor tyrosine-based activation motifs (ITAMs) in their cytoplasmic domain. Upon TCR engagement, these motifs become phosphorylated by Src family protein tyrosine kinases LCK and FYN, resulting in the activation of downstream signaling pathways. In addition to this role of signal transduction in T-cell activation, CD3G plays an essential role in the dynamic regulation of TCR expression at the cell surface. Indeed, constitutive TCR cycling is dependent on the di-leucine-based (diL) receptor-sorting motif present in CD3G. The chain is T-cell surface glycoprotein CD3 gamma chain (CD3G) from Bos taurus (Bovine).